Consider the following 663-residue polypeptide: UvrABC system protein B (663 aa).

The 389-residue stretch at 26–414 (DGLESGLAKQ…DNVAEQVVRP (389 aa)) folds into the Helicase ATP-binding domain. Position 39–46 (39–46 (GVTGSGKT)) interacts with ATP. The short motif at 92-115 (YYDYYQPEAYVPASDTFIEKDASI) is the Beta-hairpin element. The Helicase C-terminal domain maps to 430–596 (QVDDLMSEIR…GINKSVEDIL (167 aa)). In terms of domain architecture, UVR spans 624 to 659 (AKQINALEKQMYAHAQNMEFELAAKIRDEYLLLKEQ).

This sequence belongs to the UvrB family. In terms of assembly, forms a heterotetramer with UvrA during the search for lesions. Interacts with UvrC in an incision complex.

It localises to the cytoplasm. The UvrABC repair system catalyzes the recognition and processing of DNA lesions. A damage recognition complex composed of 2 UvrA and 2 UvrB subunits scans DNA for abnormalities. Upon binding of the UvrA(2)B(2) complex to a putative damaged site, the DNA wraps around one UvrB monomer. DNA wrap is dependent on ATP binding by UvrB and probably causes local melting of the DNA helix, facilitating insertion of UvrB beta-hairpin between the DNA strands. Then UvrB probes one DNA strand for the presence of a lesion. If a lesion is found the UvrA subunits dissociate and the UvrB-DNA preincision complex is formed. This complex is subsequently bound by UvrC and the second UvrB is released. If no lesion is found, the DNA wraps around the other UvrB subunit that will check the other stand for damage. In Legionella pneumophila (strain Lens), this protein is UvrABC system protein B.